Here is a 133-residue protein sequence, read N- to C-terminus: Serine/threonine-protein kinase RsbT (133 aa).

The enzyme catalyses L-seryl-[protein] + ATP = O-phospho-L-seryl-[protein] + ADP + H(+). It catalyses the reaction L-threonyl-[protein] + ATP = O-phospho-L-threonyl-[protein] + ADP + H(+). Provides the crucial link between the upstream module (communication of environmental stress) and the downstream module (integration of the environmental signals with signals of energy stress) that compose the signal transduction pathway controlling the sigma-B factor. Phosphorylates and inactivates its specific antagonist protein RsbS thanks to its serine kinase activity. Upon phosphorylation of RsbS, RsbT is released to stimulate RsbU, a PP2C phosphatase, thereby initiating the signaling cascade that ultimately activates sigma-B. The activity of the RsbU phosphatase may be stimulated by a long-lived interaction with RsbT and the serine kinase function of RsbT is not required to directly modify RsbU. Also phosphorylates RsbR thanks to its threonine kinase activity, preventing it to phosphorylate RsbT. The sequence is that of Serine/threonine-protein kinase RsbT (rsbT) from Bacillus subtilis (strain 168).